The following is a 313-amino-acid chain: Olfactory receptor 51A2 (313 aa).

Topologically, residues 1 to 27 (MSIINTSYVEITTFFLVGMPGLEYAHI) are extracellular. Asn5 is a glycosylation site (N-linked (GlcNAc...) asparagine). A helical membrane pass occupies residues 28–48 (WISIPICSMYLIAILGNGTIL). Residues 49 to 56 (FIIKTEPS) are Cytoplasmic-facing. A helical membrane pass occupies residues 57–77 (LHGPMYYFLSMLAMSDLGLSL). Residues 78-101 (SSLPTVLSIFLFNAPETSSSACFA) are Extracellular-facing. The cysteines at positions 99 and 191 are disulfide-linked. Residues 102-122 (QEFFIHGFSVLESSVLLIMSF) traverse the membrane as a helical segment. Over 123-141 (DRFLAIHNPLRYTSILTTV) the chain is Cytoplasmic. A helical membrane pass occupies residues 142–162 (RVAQIGIVFSFKSMLLVLPFP). Over 163–198 (FTLRSLRYCKKNQLSHSYCLHQDVMKLACSDNRIDV) the chain is Extracellular. Residues 199–218 (IYGFFGALCLMVDFILIAVS) traverse the membrane as a helical segment. The Cytoplasmic portion of the chain corresponds to 219-238 (YTLILKTVPGIASKKEELKA). A helical transmembrane segment spans residues 239-259 (LNTCVSHICAVIIFYLPIINL). Over 260-274 (AVVHRFAGHVSPLIN) the chain is Extracellular. A helical membrane pass occupies residues 275–295 (VLMANVLLLVPPLMKPIVYCV). The Cytoplasmic segment spans residues 296–313 (KTKQIRVRVVAKLCQWKI).

Belongs to the G-protein coupled receptor 1 family.

It localises to the cell membrane. Functionally, odorant receptor. The chain is Olfactory receptor 51A2 (OR51A2) from Homo sapiens (Human).